A 750-amino-acid polypeptide reads, in one-letter code: Photosystem I P700 chlorophyll a apoprotein A1 (750 aa).

8 helical membrane passes run 70-93, 156-179, 195-219, 291-309, 346-369, 385-411, 433-455, and 531-549; these read VFSA…FHGA, LYCT…FHYH, LNHH…HVSL, IAHH…GHMY, WHAQ…HHMY, LSLF…IFMV, AIIS…LYIH, and FLVH…LILL. The [4Fe-4S] cluster site is built by C573 and C582. A run of 2 helical transmembrane segments spans residues 589–610 and 664–686; these read HVFL…HFSW and LSAY…MFLF. Position 675 (H675) interacts with chlorophyll a'. Chlorophyll a contacts are provided by M683 and Y691. W692 contacts phylloquinone. Residues 724–744 traverse the membrane as a helical segment; sequence AVGVTHYLLGGIATTWAFFLA.

The protein belongs to the PsaA/PsaB family. In terms of assembly, the PsaA/B heterodimer binds the P700 chlorophyll special pair and subsequent electron acceptors. PSI consists of a core antenna complex that captures photons, and an electron transfer chain that converts photonic excitation into a charge separation. The eukaryotic PSI reaction center is composed of at least 11 subunits. Requires P700 is a chlorophyll a/chlorophyll a' dimer, A0 is one or more chlorophyll a, A1 is one or both phylloquinones and FX is a shared 4Fe-4S iron-sulfur center. as cofactor.

The protein localises to the plastid. It localises to the chloroplast thylakoid membrane. The enzyme catalyses reduced [plastocyanin] + hnu + oxidized [2Fe-2S]-[ferredoxin] = oxidized [plastocyanin] + reduced [2Fe-2S]-[ferredoxin]. Its function is as follows. PsaA and PsaB bind P700, the primary electron donor of photosystem I (PSI), as well as the electron acceptors A0, A1 and FX. PSI is a plastocyanin-ferredoxin oxidoreductase, converting photonic excitation into a charge separation, which transfers an electron from the donor P700 chlorophyll pair to the spectroscopically characterized acceptors A0, A1, FX, FA and FB in turn. Oxidized P700 is reduced on the lumenal side of the thylakoid membrane by plastocyanin. The sequence is that of Photosystem I P700 chlorophyll a apoprotein A1 from Morus indica (Mulberry).